Reading from the N-terminus, the 634-residue chain is Probable threonine--tRNA ligase, cytoplasmic (634 aa).

The TGS domain maps to 1 to 61; the sequence is MSIYVTFKGQ…NENQKIELYD (61 aa).

The protein belongs to the class-II aminoacyl-tRNA synthetase family.

The protein resides in the cytoplasm. The catalysed reaction is tRNA(Thr) + L-threonine + ATP = L-threonyl-tRNA(Thr) + AMP + diphosphate + H(+). The sequence is that of Probable threonine--tRNA ligase, cytoplasmic from Enterocytozoon bieneusi (strain H348) (Microsporidian parasite).